Consider the following 533-residue polypeptide: Berberine bridge enzyme-like 28 (533 aa).

A signal peptide spans 1–23; the sequence is MEFSSFLFTILLFSLNISPLVSA. Cys34 and Cys96 are disulfide-bonded. The FAD-binding PCMH-type domain occupies 74–249; the sequence is ETPKPVSIIT…LSWKVKLVDV (176 aa). His111 carries the pros-8alpha-FAD histidine modification. N-linked (GlcNAc...) asparagine glycosylation is found at Asn142 and Asn440.

It belongs to the oxygen-dependent FAD-linked oxidoreductase family. It depends on FAD as a cofactor.

The protein resides in the secreted. It localises to the cell wall. Functionally, involved in adaptation to salt stress. This Arabidopsis thaliana (Mouse-ear cress) protein is Berberine bridge enzyme-like 28.